We begin with the raw amino-acid sequence, 479 residues long: Aspartyl/glutamyl-tRNA(Asn/Gln) amidotransferase subunit B (479 aa).

It belongs to the GatB/GatE family. GatB subfamily. In terms of assembly, heterotrimer of A, B and C subunits.

The enzyme catalyses L-glutamyl-tRNA(Gln) + L-glutamine + ATP + H2O = L-glutaminyl-tRNA(Gln) + L-glutamate + ADP + phosphate + H(+). It carries out the reaction L-aspartyl-tRNA(Asn) + L-glutamine + ATP + H2O = L-asparaginyl-tRNA(Asn) + L-glutamate + ADP + phosphate + 2 H(+). In terms of biological role, allows the formation of correctly charged Asn-tRNA(Asn) or Gln-tRNA(Gln) through the transamidation of misacylated Asp-tRNA(Asn) or Glu-tRNA(Gln) in organisms which lack either or both of asparaginyl-tRNA or glutaminyl-tRNA synthetases. The reaction takes place in the presence of glutamine and ATP through an activated phospho-Asp-tRNA(Asn) or phospho-Glu-tRNA(Gln). This is Aspartyl/glutamyl-tRNA(Asn/Gln) amidotransferase subunit B from Streptococcus suis (strain 98HAH33).